The following is a 93-amino-acid chain: UPF0358 protein lmo1070 (93 aa).

Belongs to the UPF0358 family.

In Listeria monocytogenes serovar 1/2a (strain ATCC BAA-679 / EGD-e), this protein is UPF0358 protein lmo1070.